The chain runs to 525 residues: Arylsulfatase G (525 aa).

The signal sequence occupies residues Met-1 to Ser-16. Ca(2+)-binding residues include Asp-44, Asp-45, and Cys-84. Catalysis depends on Cys-84, which acts as the Nucleophile. Cys-84 bears the 3-oxoalanine (Cys) mark. Asn-117 is a glycosylation site (N-linked (GlcNAc...) asparagine). Residue Lys-137 participates in substrate binding. His-139 is a catalytic residue. Ser-162 serves as a coordination point for substrate. A glycan (N-linked (GlcNAc...) asparagine) is linked at Asn-215. His-251 contacts substrate. Residues Asp-302 and Asn-303 each contribute to the Ca(2+) site. Residues Asn-356 and Asn-497 are each glycosylated (N-linked (GlcNAc...) asparagine).

This sequence belongs to the sulfatase family. Ca(2+) serves as cofactor. Post-translationally, N-glycosylated. N-glycosylated with both high mannose and complex type sugars. The conversion to 3-oxoalanine (also known as C-formylglycine, FGly), of a serine or cysteine residue in prokaryotes and of a cysteine residue in eukaryotes, is critical for catalytic activity. In terms of processing, the 63-kDa precursor undergoes proteolytic processing in two steps, yielding two fragments in the first step (apparent molecular masses of 44 and 18 kDa). In the second step, the 44-kDa fragment is processed further to the 34- and 10-kDa chains. The 10-kDa chain is a cleavage product of the 44-kDa fragment but linked to the 18-kDa chain through a disulfide bridge. Widely expressed, with very low expression in brain, lung, heart and skeletal muscle.

Its subcellular location is the lysosome. The enzyme catalyses an aryl sulfate + H2O = a phenol + sulfate + H(+). The catalysed reaction is Hydrolysis of the 3-sulfate groups of the N-sulfo-D-glucosamine 3-O-sulfate units of heparin.. Inhibited by phosphate. The phosphate forms a covalent bond with the active site 3-oxoalanine. Functionally, displays arylsulfatase activity at acidic pH towards artificial substrates, such as p-nitrocatechol sulfate and also, but with a lower activity towards p-nitrophenyl sulfate and 4-methylumbelliferyl sulfate. Catalyzes the hydrolysis of the 3-sulfate groups of the N-sulfo-D-glucosamine 3-O-sulfate units of heparin. The protein is Arylsulfatase G (ARSG) of Homo sapiens (Human).